Reading from the N-terminus, the 330-residue chain is MALRMPFNQAFWEEYLSGQDATLPSLPDTSTLTSRVIRILGGNPGAMHLQGTNTYLVGTGPSRILIDTGQGLPIWLSRIVGVLQSNNISISHILLTHWHGDHTGGVPDLISYNPTLAEHVYKNLPDLGQKPIEDGQIFAVEGATVRAVFTPGHSVDHMCFLLEEENALFTGDNVLGHGFSVAPDLGRYMESLELMAKLGCVIGYPAHGAVIDDLPSKLEEYIRHKEMRVQGILSVLVKERERVEGERGKEGRRKGGMTLHEIARAMFGTVPDEVIDQAMAPFLMQALWKLTEDGKVGFEPGDPVKRKWFAVARRKTRPSIRRQHGSVTSR.

4 residues coordinate Zn(2+): H97, H99, D101, and H102. D101 functions as the Proton donor/acceptor in the catalytic mechanism.

It belongs to the metallo-beta-lactamase superfamily. Requires Zn(2+) as cofactor.

It functions in the pathway secondary metabolite biosynthesis. Functionally, lactamase-like protein; part of the gene cluster that mediates the biosynthesis of neosartoricin, a prenylated anthracenone that exhibits T-cell antiproliferative activity, suggestive of a physiological role as an immunosuppressive agent. The non-reducing polyketide synthase nscA probably synthesizes and cyclizes the decaketide backbone. The hydrolase nscB then mediates the product release through hydrolysis followed by spontaneous decarboxylation. The prenyltransferase nscD catalyzes the addition of the dimethylallyl group to the aromatic C5. The FAD-dependent monooxygenase nscC is then responsible for the stereospecific hydroxylation at C2. There is no gene encoding O-acetyltransferase in the nsc gene cluster; thus, the last step of 2-O-acetylation leading to neosartoricin may be catalyzed by an unidentified O-acetyltransferase. This is Lactamase-like protein nscB from Aspergillus fumigatus (strain ATCC MYA-4609 / CBS 101355 / FGSC A1100 / Af293) (Neosartorya fumigata).